The sequence spans 426 residues: Glucose-6-phosphate isomerase (426 aa).

The Proton donor role is filled by glutamate 282. Residues histidine 303 and lysine 417 contribute to the active site.

Belongs to the GPI family.

Its subcellular location is the cytoplasm. It catalyses the reaction alpha-D-glucose 6-phosphate = beta-D-fructose 6-phosphate. It participates in carbohydrate biosynthesis; gluconeogenesis. Its pathway is carbohydrate degradation; glycolysis; D-glyceraldehyde 3-phosphate and glycerone phosphate from D-glucose: step 2/4. Functionally, catalyzes the reversible isomerization of glucose-6-phosphate to fructose-6-phosphate. This chain is Glucose-6-phosphate isomerase, found in Onion yellows phytoplasma (strain OY-M).